Consider the following 424-residue polypeptide: Appressorium protein ROW1 (424 aa).

Residues 1 to 21 (MTKLTLTVALVSALLASGASA) form the signal peptide. 4 disordered regions span residues 19-54 (ASAQ…WQPK), 69-90 (ANRI…GYNT), 278-304 (SGST…CSSV), and 327-398 (SSSA…TQGA). The Extracellular portion of the chain corresponds to 22–403 (QQPTGTGNGP…NTQGAASSAS (382 aa)). Over residues 37–54 (TDLNRNQPTKSWTQWQPK) the composition is skewed to polar residues. Composition is skewed to low complexity over residues 295 to 304 (APSSSQCSSV) and 327 to 347 (SSSA…SASS). Gly residues predominate over residues 362–382 (SGTGSGSGSGSGSGSGSGSGS). Low complexity predominate over residues 383-398 (SSGSSSSGSSSNTQGA). Residues 404–424 (SLTISVGLAGLVAIGAAAFAL) form a helical membrane-spanning segment.

It localises to the cell membrane. The protein localises to the secreted. Plays a role in the formation of the appressorium, a specialized infection structure with the purpose of penetrating the host surface, and is required for proper remodeling of the appressorium wall and vesicle secretion. In Mycosarcoma maydis (Corn smut fungus), this protein is Appressorium protein ROW1.